The chain runs to 793 residues: Kinesin-associated protein 3 (793 aa).

A Phosphoserine modification is found at serine 60. Over residues 103–119 (LPGKEKKEKSSKPKDPP) the composition is skewed to basic and acidic residues. The disordered stretch occupies residues 103–123 (LPGKEKKEKSSKPKDPPPFEG). 5 ARM repeats span residues 333–373 (FMEN…NLSF), 374–412 (DTGL…HISM), 494–533 (DGPT…NLTI), 578–620 (DDSC…QMVF), and 621–662 (HQAT…IIAE).

Interacts with SMC3 subunit of the cohesin complex. Heterotrimer of KIFAP3, KIF3A and KIF3B. Interacts with RAP1GDS1/SMG GDS. Post-translationally, phosphorylated on tyrosine residues by SRC in vitro; this reduces the binding affinity of the protein for RAP1GDS1.

Functionally, involved in tethering the chromosomes to the spindle pole and in chromosome movement. Binds to the tail domain of the KIF3A/KIF3B heterodimer to form a heterotrimeric KIF3 complex and may regulate the membrane binding of this complex. The polypeptide is Kinesin-associated protein 3 (Kifap3) (Mus musculus (Mouse)).